Consider the following 307-residue polypeptide: Methionyl-tRNA formyltransferase (307 aa).

108–111 (SLLP) lines the (6S)-5,6,7,8-tetrahydrofolate pocket.

Belongs to the Fmt family.

It catalyses the reaction L-methionyl-tRNA(fMet) + (6R)-10-formyltetrahydrofolate = N-formyl-L-methionyl-tRNA(fMet) + (6S)-5,6,7,8-tetrahydrofolate + H(+). Its function is as follows. Attaches a formyl group to the free amino group of methionyl-tRNA(fMet). The formyl group appears to play a dual role in the initiator identity of N-formylmethionyl-tRNA by promoting its recognition by IF2 and preventing the misappropriation of this tRNA by the elongation apparatus. This Xylella fastidiosa (strain M12) protein is Methionyl-tRNA formyltransferase.